The chain runs to 239 residues: Wilms tumor protein homolog (239 aa).

The 9aaTAD signature appears at 43 to 51; it reads MTWNQMNLG. 3 C2H2-type zinc fingers span residues 113–137, 143–167, and 173–195; these read FMCA…SRKH, YQCD…QRRH, and FQCK…TRTH. Important for interaction with target DNA regions lie at residues 157-171 and 183-191; these read SDQL…TGVK and SRSDHLKTH. A KTS motif motif is present at residues 198–200; sequence KTS. The C2H2-type 4 zinc finger occupies 204–228; the sequence is FSCRWPSCQKKFARSDELVRHHNMH. Residue K234 forms a Glycyl lysine isopeptide (Lys-Gly) (interchain with G-Cter in SUMO2) linkage.

This sequence belongs to the EGR C2H2-type zinc-finger protein family. As to quaternary structure, interacts with ZNF224 via the zinc-finger region. Interacts with WTAP, AMER1 and SRY. Homodimer. Interacts with WTIP. Interacts with actively translating polysomes. Detected in nuclear ribonucleoprotein (mRNP) particles. Interacts with U2AF2. Interacts with HNRNPU via the zinc-finger region. Interacts with CITED2.

The protein localises to the nucleus speckle. It localises to the nucleus. The protein resides in the nucleoplasm. It is found in the cytoplasm. In terms of biological role, transcription factor that plays an important role in cellular development and cell survival. Recognizes and binds to the DNA sequence 5'-GCG(T/G)GGGCG-3'. Regulates the expression of numerous target genes, including EPO. Plays an essential role for development of the urogenital system. It has a tumor suppressor as well as an oncogenic role in tumor formation. Function may be isoform-specific: isoforms lacking the KTS motif may act as transcription factors. Isoforms containing the KTS motif may bind mRNA and play a role in mRNA metabolism or splicing. In Sminthopsis macroura (Stripe-faced dunnart), this protein is Wilms tumor protein homolog (WT1).